We begin with the raw amino-acid sequence, 218 residues long: Pyridoxine/pyridoxamine 5'-phosphate oxidase (218 aa).

Substrate is bound by residues 14 to 17 and Lys-72; that span reads RREY. FMN is bound by residues 67-72, 82-83, Arg-88, Lys-89, and Gln-111; these read RIVLLK and YT. The substrate site is built by Tyr-129, Arg-133, and Ser-137. FMN is bound by residues 146–147 and Trp-191; that span reads QS. 197–199 is a substrate binding site; that stretch reads RLH. Arg-201 contributes to the FMN binding site.

The protein belongs to the pyridoxamine 5'-phosphate oxidase family. In terms of assembly, homodimer. Requires FMN as cofactor.

The enzyme catalyses pyridoxamine 5'-phosphate + O2 + H2O = pyridoxal 5'-phosphate + H2O2 + NH4(+). It carries out the reaction pyridoxine 5'-phosphate + O2 = pyridoxal 5'-phosphate + H2O2. It participates in cofactor metabolism; pyridoxal 5'-phosphate salvage; pyridoxal 5'-phosphate from pyridoxamine 5'-phosphate: step 1/1. It functions in the pathway cofactor metabolism; pyridoxal 5'-phosphate salvage; pyridoxal 5'-phosphate from pyridoxine 5'-phosphate: step 1/1. In terms of biological role, catalyzes the oxidation of either pyridoxine 5'-phosphate (PNP) or pyridoxamine 5'-phosphate (PMP) into pyridoxal 5'-phosphate (PLP). This chain is Pyridoxine/pyridoxamine 5'-phosphate oxidase, found in Escherichia coli O7:K1 (strain IAI39 / ExPEC).